Reading from the N-terminus, the 437-residue chain is Protein translocase subunit SecY (437 aa).

The next 10 membrane-spanning stretches (helical) occupy residues 19–39 (LFTL…IPGV), 69–89 (LLQI…SIIL), 122–142 (VALA…GALF), 157–177 (IFTT…VMWL), 189–209 (GMSI…LWSI), 219–239 (WIEF…VVFV), 275–295 (GIIP…VVQF), 318–338 (HITV…AISF), 378–398 (GSLY…PLGA), and 400–420 (QNFP…LETV).

It belongs to the SecY/SEC61-alpha family. Component of the Sec protein translocase complex. Heterotrimer consisting of SecY, SecE and SecG subunits. The heterotrimers can form oligomers, although 1 heterotrimer is thought to be able to translocate proteins. Interacts with the ribosome. Interacts with SecDF, and other proteins may be involved. Interacts with SecA.

The protein resides in the cell membrane. Its function is as follows. The central subunit of the protein translocation channel SecYEG. Consists of two halves formed by TMs 1-5 and 6-10. These two domains form a lateral gate at the front which open onto the bilayer between TMs 2 and 7, and are clamped together by SecE at the back. The channel is closed by both a pore ring composed of hydrophobic SecY resides and a short helix (helix 2A) on the extracellular side of the membrane which forms a plug. The plug probably moves laterally to allow the channel to open. The ring and the pore may move independently. The sequence is that of Protein translocase subunit SecY from Streptomyces scabiei.